We begin with the raw amino-acid sequence, 356 residues long: DNA polymerase IV (356 aa).

The UmuC domain occupies I7–G188. 2 residues coordinate Mg(2+): D11 and D106. E107 is an active-site residue.

It belongs to the DNA polymerase type-Y family. Monomer. The cofactor is Mg(2+).

The protein resides in the cytoplasm. It catalyses the reaction DNA(n) + a 2'-deoxyribonucleoside 5'-triphosphate = DNA(n+1) + diphosphate. Functionally, poorly processive, error-prone DNA polymerase involved in untargeted mutagenesis. Copies undamaged DNA at stalled replication forks, which arise in vivo from mismatched or misaligned primer ends. These misaligned primers can be extended by PolIV. Exhibits no 3'-5' exonuclease (proofreading) activity. May be involved in translesional synthesis, in conjunction with the beta clamp from PolIII. This Listeria welshimeri serovar 6b (strain ATCC 35897 / DSM 20650 / CCUG 15529 / CIP 8149 / NCTC 11857 / SLCC 5334 / V8) protein is DNA polymerase IV.